The primary structure comprises 280 residues: MDIILLIQAVIMGIVEGITEFLPISSTGYLILSADLMGFWTKEKVDLFVVVVQFGAILAVIYDYWDRLWQALMGLLTGKAEGMSNPRQLGLSLIVATIPVMIVGFTFADEIKAYLFDPIVVAIMLIIGGLLIFYVENRPKPIIAQEAEDVGLKTALMIGLFQCLALIPGTSRSGATIVGALWLGVSRKASAEFSFFLGIPVIVGAALLDLLKHKDVLTSSEDWLVLGIGTVVSFIVALLCIRLLVAWVSRRDFKIFAWLRIITGVLVLIAAWGFGYQMAG.

Transmembrane regions (helical) follow at residues 3-23, 45-65, 88-108, 115-135, 150-170, 191-211, 225-245, and 255-275; these read IILL…EFLP, VDLF…YDYW, QLGL…FTFA, LFDP…IFYV, VGLK…IPGT, AEFS…LDLL, VLGI…RLLV, and IFAW…WGFG.

The protein belongs to the UppP family.

Its subcellular location is the cell inner membrane. It catalyses the reaction di-trans,octa-cis-undecaprenyl diphosphate + H2O = di-trans,octa-cis-undecaprenyl phosphate + phosphate + H(+). Functionally, catalyzes the dephosphorylation of undecaprenyl diphosphate (UPP). Confers resistance to bacitracin. This chain is Undecaprenyl-diphosphatase, found in Psychrobacter arcticus (strain DSM 17307 / VKM B-2377 / 273-4).